Here is a 1059-residue protein sequence, read N- to C-terminus: Carbamoyl phosphate synthase large chain (1059 aa).

The carboxyphosphate synthetic domain stretch occupies residues 1–401 (MPKRKDIQKI…SLLKACRSLE (401 aa)). ATP is bound by residues arginine 129, arginine 169, glycine 175, glycine 176, arginine 208, isoleucine 210, glutamate 215, glycine 241, isoleucine 242, histidine 243, glutamine 284, and glutamate 298. One can recognise an ATP-grasp 1 domain in the interval 133–327 (KQLMEELGQP…IAKLAAKIAV (195 aa)). Residues glutamine 284, glutamate 298, and asparagine 300 each contribute to the Mg(2+) site. The Mn(2+) site is built by glutamine 284, glutamate 298, and asparagine 300. Positions 402-546 (VCVDHNELPA…YSTYGFENES (145 aa)) are oligomerization domain. The segment at 547–929 (VKSSKESVLV…ALYKAFEASY (383 aa)) is carbamoyl phosphate synthetic domain. The 191-residue stretch at 671 to 861 (EQALKELDIP…MAQVATRLIL (191 aa)) folds into the ATP-grasp 2 domain. Arginine 707, serine 746, isoleucine 748, glutamate 752, glycine 777, valine 778, histidine 779, serine 780, glutamine 820, and glutamate 832 together coordinate ATP. 3 residues coordinate Mg(2+): glutamine 820, glutamate 832, and asparagine 834. Residues glutamine 820, glutamate 832, and asparagine 834 each coordinate Mn(2+). One can recognise an MGS-like domain in the interval 930 to 1059 (LHLPNFGNIV…ESRSFTTEAI (130 aa)). Positions 930-1059 (LHLPNFGNIV…ESRSFTTEAI (130 aa)) are allosteric domain.

It belongs to the CarB family. Composed of two chains; the small (or glutamine) chain promotes the hydrolysis of glutamine to ammonia, which is used by the large (or ammonia) chain to synthesize carbamoyl phosphate. Tetramer of heterodimers (alpha,beta)4. Mg(2+) serves as cofactor. Requires Mn(2+) as cofactor.

It catalyses the reaction hydrogencarbonate + L-glutamine + 2 ATP + H2O = carbamoyl phosphate + L-glutamate + 2 ADP + phosphate + 2 H(+). The catalysed reaction is hydrogencarbonate + NH4(+) + 2 ATP = carbamoyl phosphate + 2 ADP + phosphate + 2 H(+). The protein operates within amino-acid biosynthesis; L-arginine biosynthesis; carbamoyl phosphate from bicarbonate: step 1/1. It participates in pyrimidine metabolism; UMP biosynthesis via de novo pathway; (S)-dihydroorotate from bicarbonate: step 1/3. Functionally, large subunit of the glutamine-dependent carbamoyl phosphate synthetase (CPSase). CPSase catalyzes the formation of carbamoyl phosphate from the ammonia moiety of glutamine, carbonate, and phosphate donated by ATP, constituting the first step of 2 biosynthetic pathways, one leading to arginine and/or urea and the other to pyrimidine nucleotides. The large subunit (synthetase) binds the substrates ammonia (free or transferred from glutamine from the small subunit), hydrogencarbonate and ATP and carries out an ATP-coupled ligase reaction, activating hydrogencarbonate by forming carboxy phosphate which reacts with ammonia to form carbamoyl phosphate. The polypeptide is Carbamoyl phosphate synthase large chain (Streptococcus sanguinis (strain SK36)).